Consider the following 204-residue polypeptide: uncharacterized protein (204 aa).

Residues 1–20 (MQNPLPEVMSPEHDKRTTTP) are disordered.

This is an uncharacterized protein from Frog virus 3 (isolate Goorha) (FV-3).